The chain runs to 354 residues: UPF0496 protein At4g34330 (354 aa).

Transmembrane regions (helical) follow at residues I200–A220 and P222–I242. Positions A270–T341 form a coiled coil.

This sequence belongs to the UPF0496 family.

Its subcellular location is the membrane. This is UPF0496 protein At4g34330 from Arabidopsis thaliana (Mouse-ear cress).